A 666-amino-acid chain; its full sequence is MCLNTLCAILCFVLTVSFGFVSAQKCGESVFFRPNGNYDTNRRLVLSTLASNVSSQNNRFYNVSVGEGAGRIYALGLCIPGSDPRVCSDCIQLASQGLLQTCPNQTDSFYWTGDNADKTLCFVRYSNNSFFNKMALEPTHAVYNTMRFQGNLTAYTRTWDAFMNFMFTRVGQTRYLADISPRINQEPLSPDLIYALMQCIPGISSEDCETCLGKCVDDYQSCCNGFIGGVVNKPVCYFRWDGYKYYGAFGDEAPSQPPTPLPLPPPPPRDPDGKKISTGVIVAIVVSAVIFVVLVALGLVIWKRRQSYKTLKYHTDDDMTSPQSLQFDFTTIEVATDNFSRNNKLGQGGFGEVYKGMLPNETEIAVKRLSSNSGQGTQEFKNEVVIVAKLQHKNLVRLLGFCIERDEQILVYEFVSNKSLDYFLFDPKMKSQLDWKRRYNIIGGVTRGLLYLHQDSRLTIIHRDIKASNILLDADMNPKIADFGMARNFRVDQTEDQTGRVVGTFGYMPPEYVTHGQFSTKSDVYSFGVLILEIVCGKKNSSFFQMDDSGGNLVTHVWRLWNNDSPLDLIDPAIKESYDNDEVIRCIHIGILCVQETPADRPEMSTIFQMLTNSSITLPVPRPPGFFFRNRPNLDPLTYGSEQGQSSSMSVPFSIDSASITRATPR.

A signal peptide spans 1 to 23; the sequence is MCLNTLCAILCFVLTVSFGFVSA. Gnk2-homologous domains lie at 24–130 and 136–245; these read QKCG…NNSF and LEPT…GYKY. Topologically, residues 24-280 are extracellular; that stretch reads QKCGESVFFR…PDGKKISTGV (257 aa). 5 N-linked (GlcNAc...) asparagine glycosylation sites follow: Asn-52, Asn-62, Asn-104, Asn-127, and Asn-151. Residues 281-301 traverse the membrane as a helical segment; the sequence is IVAIVVSAVIFVVLVALGLVI. The Cytoplasmic portion of the chain corresponds to 302–666; the sequence is WKRRQSYKTL…SASITRATPR (365 aa). The region spanning 339–616 is the Protein kinase domain; that stretch reads FSRNNKLGQG…IFQMLTNSSI (278 aa). ATP contacts are provided by residues 345 to 353 and Lys-367; that span reads LGQGGFGEV. A Phosphotyrosine modification is found at Tyr-412. The active-site Proton acceptor is Asp-464. At Ser-468 the chain carries Phosphoserine. The residue at position 504 (Thr-504) is a Phosphothreonine. Tyr-512 is subject to Phosphotyrosine.

It belongs to the protein kinase superfamily. Ser/Thr protein kinase family. CRK subfamily.

The protein localises to the membrane. It catalyses the reaction L-seryl-[protein] + ATP = O-phospho-L-seryl-[protein] + ADP + H(+). The enzyme catalyses L-threonyl-[protein] + ATP = O-phospho-L-threonyl-[protein] + ADP + H(+). The chain is Putative cysteine-rich receptor-like protein kinase 31 (CRK31) from Arabidopsis thaliana (Mouse-ear cress).